We begin with the raw amino-acid sequence, 223 residues long: Ribose-5-phosphate isomerase A (223 aa).

Residues 32–35, 85–88, and 98–101 contribute to the substrate site; these read TGST, DGAD, and KGGG. The Proton acceptor role is filled by Glu107. Lys125 serves as a coordination point for substrate.

It belongs to the ribose 5-phosphate isomerase family. Homodimer.

It carries out the reaction aldehydo-D-ribose 5-phosphate = D-ribulose 5-phosphate. It functions in the pathway carbohydrate degradation; pentose phosphate pathway; D-ribose 5-phosphate from D-ribulose 5-phosphate (non-oxidative stage): step 1/1. Functionally, catalyzes the reversible conversion of ribose-5-phosphate to ribulose 5-phosphate. This is Ribose-5-phosphate isomerase A from Pseudomonas syringae pv. syringae (strain B728a).